Here is a 473-residue protein sequence, read N- to C-terminus: Cytochrome c-552 (473 aa).

An N-terminal signal peptide occupies residues 1-33; that stretch reads MQHGDEMMKKMTGKSFALSALVAASFMAAGAMA. Residue histidine 93 coordinates heme c. Heme contacts are provided by cysteine 121, cysteine 124, and lysine 125. Heme c-binding residues include cysteine 159, cysteine 162, histidine 163, cysteine 201, cysteine 204, and histidine 205. Ca(2+) is bound by residues glutamate 207, tyrosine 208, lysine 256, and glutamine 258. Tyrosine 208 provides a ligand contact to substrate. Substrate is bound at residue histidine 259. Histidine 270, cysteine 277, cysteine 280, histidine 281, histidine 296, cysteine 309, cysteine 312, histidine 313, and histidine 388 together coordinate heme c.

It belongs to the cytochrome c-552 family. The cofactor is Ca(2+). Requires heme c as cofactor.

Its subcellular location is the periplasm. It catalyses the reaction 6 Fe(III)-[cytochrome c] + NH4(+) + 2 H2O = 6 Fe(II)-[cytochrome c] + nitrite + 8 H(+). Its pathway is nitrogen metabolism; nitrate reduction (assimilation). Catalyzes the reduction of nitrite to ammonia, consuming six electrons in the process. The protein is Cytochrome c-552 of Shewanella sp. (strain ANA-3).